The following is a 509-amino-acid chain: Membrane-bound lytic murein transglycosylase F (509 aa).

A signal peptide spans 1 to 40 (MLASACTHSWRTGRFLNRIIKSSVQTLTAAALIANLSACS). Residues 41–280 (RPTTLEKIEQ…YLQERYFGHV (240 aa)) are non-LT domain. Positions 281 to 509 (NQLNYVGART…APFRVTPPML (229 aa)) are LT domain. The active site involves glutamate 327. The segment at 474–500 (DGSVAQNEDAPTTGADGTTEETPAIPA) is disordered.

The protein in the N-terminal section; belongs to the bacterial solute-binding protein 3 family. It in the C-terminal section; belongs to the transglycosylase Slt family.

The protein localises to the cell outer membrane. The catalysed reaction is Exolytic cleavage of the (1-&gt;4)-beta-glycosidic linkage between N-acetylmuramic acid (MurNAc) and N-acetylglucosamine (GlcNAc) residues in peptidoglycan, from either the reducing or the non-reducing ends of the peptidoglycan chains, with concomitant formation of a 1,6-anhydrobond in the MurNAc residue.. Murein-degrading enzyme that degrades murein glycan strands and insoluble, high-molecular weight murein sacculi, with the concomitant formation of a 1,6-anhydromuramoyl product. Lytic transglycosylases (LTs) play an integral role in the metabolism of the peptidoglycan (PG) sacculus. Their lytic action creates space within the PG sacculus to allow for its expansion as well as for the insertion of various structures such as secretion systems and flagella. This Hahella chejuensis (strain KCTC 2396) protein is Membrane-bound lytic murein transglycosylase F.